A 337-amino-acid polypeptide reads, in one-letter code: Ribosomal RNA small subunit methyltransferase H (337 aa).

S-adenosyl-L-methionine contacts are provided by residues 45–47 (GGH), D64, F91, D120, and Q127.

Belongs to the methyltransferase superfamily. RsmH family.

It is found in the cytoplasm. It carries out the reaction cytidine(1402) in 16S rRNA + S-adenosyl-L-methionine = N(4)-methylcytidine(1402) in 16S rRNA + S-adenosyl-L-homocysteine + H(+). Its function is as follows. Specifically methylates the N4 position of cytidine in position 1402 (C1402) of 16S rRNA. This Corynebacterium glutamicum (strain ATCC 13032 / DSM 20300 / JCM 1318 / BCRC 11384 / CCUG 27702 / LMG 3730 / NBRC 12168 / NCIMB 10025 / NRRL B-2784 / 534) protein is Ribosomal RNA small subunit methyltransferase H.